A 344-amino-acid chain; its full sequence is uncharacterized protein (344 aa).

The tract at residues A304–P344 is disordered. Residues T323–R336 are compositionally biased toward basic and acidic residues.

This is an uncharacterized protein from Mycobacterium tuberculosis (strain CDC 1551 / Oshkosh).